The chain runs to 984 residues: Serine/threonine-protein kinase N2 (984 aa).

Phosphoserine is present on Ser-21. The REM-1 1 domain maps to 33–109; it reads KLDFSDTMVQ…LQELNAHIVV (77 aa). Lys-77 carries the post-translational modification N6-acetyllysine. Ser-110 carries the phosphoserine modification. A disordered region spans residues 114 to 133; sequence DITDCPRTPDTPNNDPRCST. A phosphothreonine mark is found at Thr-121 and Thr-124. REM-1 domains follow at residues 121-203 and 204-284; these read TPDT…TNEL and AFDN…EVPK. A compositionally biased stretch (polar residues) spans 123–133; the sequence is DTPNNDPRCST. Phosphoserine occurs at positions 302, 306, 360, and 362. Positions 351–383 are disordered; it reads ATSVALPGWSPSETRSSFMSRTSKSKSGSSRNL. The 121-residue stretch at 353–473 folds into the C2 domain; it reads SVALPGWSPS…LYLEPQGTLF (121 aa). Residues 364 to 381 show a composition bias toward low complexity; sequence TRSSFMSRTSKSKSGSSR. The interval 382-463 is necessary to rescue apical junction formation; the sequence is NLLKTDDLSN…FLDNQRHGMC (82 aa). A phosphoserine mark is found at Ser-535, Ser-583, and Ser-620. The interval 558–584 is disordered; that stretch reads ASDSTVTKLDFDLEPEPPPAPPRASSL. Thr-628 carries the phosphothreonine modification. Ser-631 bears the Phosphoserine mark. In terms of domain architecture, Protein kinase spans 657 to 916; it reads FRCCAVLGRG…AEDVKKHPFF (260 aa). ATP is bound by residues 663–671 and Lys-686; that span reads LGRGHFGKV. Catalysis depends on Asp-782, which acts as the Proton acceptor. Thr-816 carries the post-translational modification Phosphothreonine; by PDPK1. The interval 917–977 is necessary for the catalytic activity; it reads RLIDWSALMD…EEEQEMFRDF (61 aa). The 68-residue stretch at 917 to 984 folds into the AGC-kinase C-terminal domain; the sequence is RLIDWSALMD…RDFDYIADWC (68 aa). At Ser-952 the chain carries Phosphoserine. Phosphothreonine is present on Thr-958. A negatively regulates the responsiveness of the catalytic activity by cardiolipin and is required for optimal activation by the GTP-bound RhoA region spans residues 978-984; that stretch reads DYIADWC.

Belongs to the protein kinase superfamily. AGC Ser/Thr protein kinase family. PKC subfamily. Interacts (via the REM repeats) with RHOA (GTP-bound form preferentially) and interacts (via the REM repeats) with RAC1 (GTP-bound form preferentially); the interactions induce its autophosphorylation. Interacts with RHOC. Interacts with NCK1 and NCK2. Interacts with NCK1 (via SH3 domains). Interacts with CD44. Interacts (via C-terminal kinase domain) with PDPK1; the interaction stimulates PDPK1 kinase activity. Interacts with MAP3K2; the interaction activates PRK2 kinase activity in a MAP3K2-independent kinase activity. Interacts (via C-terminal domain) with AKT1; the interaction occurs with the C-terminal cleavage product of PRK2 in apoptotic cells. Interacts (via C-terminus) with PTPN13 (via PDZ 3 domain). Interacts with CDK10. In terms of assembly, (Microbial infection) Interacts with HCV NS5B (via N-terminal finger domain). In terms of processing, autophosphorylated. Phosphorylated during mitosis. Phosphorylated by CDK10. Post-translationally, activated by limited proteolysis with trypsin. Proteolytically cleaved by caspase-3 during the induction of apoptotic cell death. In terms of tissue distribution, ubiquitous. Expressed in numerous tumor cell lines, especially in bladder tumor cells.

It localises to the cytoplasm. The protein localises to the nucleus. The protein resides in the membrane. It is found in the cell projection. Its subcellular location is the lamellipodium. It localises to the cytoskeleton. The protein localises to the cleavage furrow. The protein resides in the midbody. It is found in the cell junction. It carries out the reaction L-seryl-[protein] + ATP = O-phospho-L-seryl-[protein] + ADP + H(+). The catalysed reaction is L-threonyl-[protein] + ATP = O-phospho-L-threonyl-[protein] + ADP + H(+). Kinase activity is activated upon binding to GTP-bound Rhoa/Rac1 GTPases. Activated by caspase-3 (CASP3) cleavage during apoptosis. Activated by lipids, particularly cardiolipin and to a lesser extent by other acidic phospholipids and unsaturated fatty acids. Two specific sites, Thr-816 (activation loop of the kinase domain) and Thr-958 (turn motif), need to be phosphorylated for its full activation. In terms of biological role, PKC-related serine/threonine-protein kinase and Rho/Rac effector protein that participates in specific signal transduction responses in the cell. Plays a role in the regulation of cell cycle progression, actin cytoskeleton assembly, cell migration, cell adhesion, tumor cell invasion and transcription activation signaling processes. Phosphorylates CTTN in hyaluronan-induced astrocytes and hence decreases CTTN ability to associate with filamentous actin. Phosphorylates HDAC5, therefore lead to impair HDAC5 import. Direct RhoA target required for the regulation of the maturation of primordial junctions into apical junction formation in bronchial epithelial cells. Required for G2/M phases of the cell cycle progression and abscission during cytokinesis in a ECT2-dependent manner. Stimulates FYN kinase activity that is required for establishment of skin cell-cell adhesion during keratinocytes differentiation. Regulates epithelial bladder cells speed and direction of movement during cell migration and tumor cell invasion. Inhibits Akt pro-survival-induced kinase activity. Mediates Rho protein-induced transcriptional activation via the c-fos serum response factor (SRF). Involved in the negative regulation of ciliogenesis. (Microbial infection) Phosphorylates HCV NS5B leading to stimulation of HCV RNA replication. The protein is Serine/threonine-protein kinase N2 (PKN2) of Homo sapiens (Human).